A 332-amino-acid chain; its full sequence is Probable sugar phosphate/phosphate translocator At1g53660 (332 aa).

10 helical membrane passes run 19 to 39, 46 to 66, 82 to 102, 120 to 140, 143 to 163, 165 to 185, 199 to 219, 233 to 253, 259 to 281, and 285 to 304; these read ASIL…KWVL, FPYP…LCFL, LEIY…TLWL, AIMP…IMSC, LLIM…ELNI, WVGV…LILM, LSLM…PWIF, LVLS…FLVI, LTIR…LLFA, and LTII…ATYN. Residues 312–322 show a composition bias toward polar residues; the sequence is ESITLVSQSPK. The disordered stretch occupies residues 312–332; that stretch reads ESITLVSQSPKNSDKKPDGPL. Residues 323-332 show a composition bias toward basic and acidic residues; the sequence is NSDKKPDGPL.

The protein belongs to the TPT transporter family. TPT (TC 2.A.7.9) subfamily.

It is found in the membrane. The polypeptide is Probable sugar phosphate/phosphate translocator At1g53660 (Arabidopsis thaliana (Mouse-ear cress)).